A 279-amino-acid chain; its full sequence is Ribosomal RNA small subunit methyltransferase J (279 aa).

Residues 138–139 (ER) and Asp-194 each bind S-adenosyl-L-methionine.

Belongs to the methyltransferase superfamily. RsmJ family.

The protein resides in the cytoplasm. It carries out the reaction guanosine(1516) in 16S rRNA + S-adenosyl-L-methionine = N(2)-methylguanosine(1516) in 16S rRNA + S-adenosyl-L-homocysteine + H(+). Its function is as follows. Specifically methylates the guanosine in position 1516 of 16S rRNA. This chain is Ribosomal RNA small subunit methyltransferase J, found in Acinetobacter baumannii (strain ACICU).